The sequence spans 254 residues: MKDIIIASFYKFIPLNDFESLREPILTKMHEIGIKGTIILAHEGVNGGFAGNREQMYIFYDYLRSDSRFADLHFKETYDNKNPFDKAKVKLRKEIVTMGVQKVDPSYNAGTYLSPEEWHQFIQDPNVILLDTRNDYEYELGTFKNAINPDIENFREFPDYVQRNLIDKKDKKIAMFCTGGIRCEKTTAYMKELGFQHVYQLHDGILNYLESIPEGESLWEGKCFVFDDRVAVDQKLDRVYPQLPQDYKYEREQK.

The 95-residue stretch at Q123 to S217 folds into the Rhodanese domain. The Cysteine persulfide intermediate role is filled by C177.

Belongs to the TrhO family.

The enzyme catalyses uridine(34) in tRNA + AH2 + O2 = 5-hydroxyuridine(34) in tRNA + A + H2O. In terms of biological role, catalyzes oxygen-dependent 5-hydroxyuridine (ho5U) modification at position 34 in tRNAs. In Legionella pneumophila (strain Lens), this protein is tRNA uridine(34) hydroxylase.